We begin with the raw amino-acid sequence, 252 residues long: 5-oxoprolinase subunit A (252 aa).

The protein belongs to the LamB/PxpA family. As to quaternary structure, forms a complex composed of PxpA, PxpB and PxpC.

The enzyme catalyses 5-oxo-L-proline + ATP + 2 H2O = L-glutamate + ADP + phosphate + H(+). Catalyzes the cleavage of 5-oxoproline to form L-glutamate coupled to the hydrolysis of ATP to ADP and inorganic phosphate. In Mycolicibacterium paratuberculosis (strain ATCC BAA-968 / K-10) (Mycobacterium paratuberculosis), this protein is 5-oxoprolinase subunit A.